The chain runs to 425 residues: Serine--tRNA ligase (425 aa).

230 to 232 (TAE) is a binding site for L-serine. 261 to 263 (RSE) is a binding site for ATP. E284 lines the L-serine pocket. 348-351 (EISS) lines the ATP pocket. S384 lines the L-serine pocket.

Belongs to the class-II aminoacyl-tRNA synthetase family. Type-1 seryl-tRNA synthetase subfamily. Homodimer. The tRNA molecule binds across the dimer.

Its subcellular location is the cytoplasm. The enzyme catalyses tRNA(Ser) + L-serine + ATP = L-seryl-tRNA(Ser) + AMP + diphosphate + H(+). It catalyses the reaction tRNA(Sec) + L-serine + ATP = L-seryl-tRNA(Sec) + AMP + diphosphate + H(+). Its pathway is aminoacyl-tRNA biosynthesis; selenocysteinyl-tRNA(Sec) biosynthesis; L-seryl-tRNA(Sec) from L-serine and tRNA(Sec): step 1/1. Catalyzes the attachment of serine to tRNA(Ser). Is also able to aminoacylate tRNA(Sec) with serine, to form the misacylated tRNA L-seryl-tRNA(Sec), which will be further converted into selenocysteinyl-tRNA(Sec). The sequence is that of Serine--tRNA ligase from Streptococcus pyogenes serotype M4 (strain MGAS10750).